The chain runs to 236 residues: L-aspartate dehydrogenase (236 aa).

NAD(+) is bound by residues 10–11 (AI), aspartate 31, 58–59 (AS), tyrosine 66, 80–81 (LS), alanine 111, and asparagine 162. Residue histidine 189 is part of the active site. 212–215 (NPKT) is a binding site for NAD(+).

It belongs to the L-aspartate dehydrogenase family. As to quaternary structure, homodimer.

It carries out the reaction L-aspartate + NADP(+) + H2O = oxaloacetate + NH4(+) + NADPH + H(+). It catalyses the reaction L-aspartate + NAD(+) + H2O = oxaloacetate + NH4(+) + NADH + H(+). It participates in cofactor biosynthesis; NAD(+) biosynthesis; iminoaspartate from L-aspartate (dehydrogenase route): step 1/1. Its function is as follows. Specifically catalyzes the NAD or NADP-dependent dehydrogenation of L-aspartate to iminoaspartate. The sequence is that of L-aspartate dehydrogenase from Archaeoglobus fulgidus (strain ATCC 49558 / DSM 4304 / JCM 9628 / NBRC 100126 / VC-16).